The chain runs to 570 residues: Frizzled-2 (570 aa).

A signal peptide spans 1 to 28; that stretch reads MRARSALPRSALPRLLLPLLLLPAAGPA. At 29-252 the chain is on the extracellular side; that stretch reads QFHGEKGISI…HHHTRFARLW (224 aa). Positions 39-158 constitute an FZ domain; sequence PDHGFCQPIS…HGAEQICVGQ (120 aa). 5 disulfide bridges follow: Cys-44–Cys-105, Cys-52–Cys-98, Cys-89–Cys-126, Cys-115–Cys-155, and Cys-119–Cys-143. A glycan (N-linked (GlcNAc...) asparagine) is linked at Asn-58. N-linked (GlcNAc...) asparagine glycosylation occurs at Asn-159. Residues 166 to 194 form a disordered region; that stretch reads PALLTTAPPSGLQPGAGGTPGGPGGGGAP. Over residues 179-193 the composition is skewed to gly residues; sequence PGAGGTPGGPGGGGA. Residues 253–273 form a helical membrane-spanning segment; that stretch reads ILTWSVLCCASTFFTVTTSLV. Topologically, residues 274–284 are cytoplasmic; that stretch reads AMQRFRYPERP. Residues 285-305 traverse the membrane as a helical segment; sequence IIFLSGCYTMVSVAYIAGFVL. At 306–332 the chain is on the extracellular side; the sequence is QERVVCNERFSEDGYRTVGQGTKKEGC. A helical membrane pass occupies residues 333-353; sequence TILFMMLYFFSMASSIWWVIL. Over 354–375 the chain is Cytoplasmic; sequence SLTWFLAAGMKWGHAAIEANSQ. The chain crosses the membrane as a helical span at residues 376-396; that stretch reads YFHLAAWAVPAVKTITILAMG. At 397 to 419 the chain is on the extracellular side; it reads QIDGDLLSGVCFVGLNRLDPLRG. The helical transmembrane segment at 420 to 440 threads the bilayer; the sequence is FVLAPLFVYLFIGTSFLLAGF. Over 441–466 the chain is Cytoplasmic; the sequence is VSLFRIRTIMKHDGTKTEPLERLMVR. Residues 467 to 487 form a helical membrane-spanning segment; sequence IGVFSVLYTVPATIVIACYFY. At 488–524 the chain is on the extracellular side; it reads EQAFREHWERSWVSQHCKSLAIPCPAHYTPRTSPDFT. A helical transmembrane segment spans residues 525–545; the sequence is VYMIKYLMTLIVGITSGFWIW. Residues 546-570 lie on the Cytoplasmic side of the membrane; the sequence is SGKTLHSWRKFYTRLTNSRHGETTV. A Lys-Thr-X-X-X-Trp motif, mediates interaction with the PDZ domain of Dvl family members motif is present at residues 548–553; the sequence is KTLHSW. Residues 568–570 carry the PDZ-binding motif; sequence TTV.

It belongs to the G-protein coupled receptor Fz/Smo family. Post-translationally, ubiquitinated by ZNRF3, leading to its degradation by the proteasome. As to expression, widely expressed. Most abundant in kidney, liver, uterus, ovary and heart. Lower levels seen in brain and intestine. Extremely low in calvaria, mammary glands and testis.

Its subcellular location is the membrane. The protein localises to the cell membrane. Functionally, receptor for Wnt proteins. Most of frizzled receptors are coupled to the beta-catenin canonical signaling pathway, which leads to the activation of disheveled proteins, inhibition of GSK-3 kinase, nuclear accumulation of beta-catenin and activation of Wnt target genes. A second signaling pathway involving PKC and calcium fluxes has been seen for some family members, but it is not yet clear if it represents a distinct pathway or if it can be integrated in the canonical pathway, as PKC seems to be required for Wnt-mediated inactivation of GSK-3 kinase. Both pathways seem to involve interactions with G-proteins. May be involved in transduction and intercellular transmission of polarity information during tissue morphogenesis and/or in differentiated tissues. Activation by Wnt5A stimulates PKC activity via a G-protein-dependent mechanism. The protein is Frizzled-2 (Fzd2) of Rattus norvegicus (Rat).